The sequence spans 261 residues: Histone H1-I (261 aa).

Positions 1 to 22 are enriched in low complexity; that stretch reads MSETEAAPVVAPAAEAAPAAEA. 2 disordered regions span residues 1 to 63 and 125 to 261; these read MSET…PPYI and FKLS…KGKK. A compositionally biased stretch (basic and acidic residues) spans 41–50; the sequence is APKEPKAPKE. Residues 58–129 form the H15 domain; that stretch reads THPPYIEMVK…KVKGSFKLSE (72 aa). The segment covering 133-142 has biased composition (basic residues); sequence AKAKKSTPKK. Repeat copies occupy residues 136–140 and 188–192. Positions 136–250 are 7 X 5 AA repeats of K-K-[AS]-T-P; sequence KKSTPKKAKA…KKAPAKKSTP (115 aa). A DNA-binding region spans residues 139–142; it reads TPKK. Over residues 143-198 the composition is skewed to basic and acidic residues; the sequence is AKADGEAKPKKSEAKPKKAEAVKKTKAPKEKVERPKKEKKEKVEKKKATPKAEKPK. The 3; approximate repeat unit spans residues 199-203; it reads KAATP. A run of 4 repeats spans residues 209–213, 230–234, 236–240, and 246–250. Residues 227 to 250 show a composition bias toward basic residues; that stretch reads AKPKKATPSKKAAPKKAPAKKSTP. The segment covering 251–261 has biased composition (basic and acidic residues); sequence KAKEAKSKGKK.

The protein belongs to the histone H1/H5 family.

Its subcellular location is the nucleus. The protein localises to the chromosome. Functionally, histones H1 are necessary for the condensation of nucleosome chains into higher-order structures. The sequence is that of Histone H1-I (H1-I) from Volvox carteri (Green alga).